Consider the following 198-residue polypeptide: MSLSIDVTSLPSISSSIFKNESSSTTSTLSGKSIGRNELYVSPDAEAFNKYMLSKSPEDIGPSDSASNDPLTSFSIRSHAVKTNADAGVSMDSSTQSRPSSNVGCDQVDFSFNKAVKVNANLDSSISISTDQKREKSKKDHKNGKHYPKIEAESDSDDYVLDDSDSDDGKCKNCKYKRKYFALRMRMKHVAMQLIEDL.

A compositionally biased stretch (low complexity) spans 17–30 (IFKNESSSTTSTLS). Disordered stretches follow at residues 17-36 (IFKN…SIGR) and 53-73 (LSKS…PLTS). The span at 64 to 73 (DSASNDPLTS) shows a compositional bias: polar residues. Position 67 is a phosphoserine; by host CK1 (serine 67). Aspartate 92 lines the Mg(2+) pocket. A disordered region spans residues 129–167 (STDQKREKSKKDHKNGKHYPKIEAESDSDDYVLDDSDSD). A compositionally biased stretch (acidic residues) spans 153–166 (ESDSDDYVLDDSDS). Serine 154, serine 156, serine 164, and serine 166 each carry phosphoserine; by host.

The protein belongs to the rotavirus NSP5 family. In terms of assembly, homodimer. Interacts with VP1. Interacts with VP2. Interacts with NSP2; this interaction leads to up-regulation of NSP5 hyperphosphorylation and formation of virus factories. Interacts with NSP6. Participates in the selective exclusion of host proteins from stress granules (SG) and P bodies (PB). Also participates in the sequestration of these remodeled organelles in viral factories. Mg(2+) serves as cofactor. O-glycosylated. In terms of processing, hyperphosphorylated on serine residues, when in dimeric form. Phosphorylation by host CK1 is required for the hyperphosphorylation of NSP5 dimer.

The protein localises to the host cytoplasm. Plays an essential role in the viral genome replication. Participates, together with NSP2, in the formation of viral factories (viroplasms), which are large inclusions in the host cytoplasm where replication intermediates are assembled and viral RNA replication takes place. Orchestrates the recruitment of viroplasmic proteins such as capsid proteins to these factories. Participates in the selective exclusion of host proteins from stress granules (SG) and P bodies (PB). Also participates in the sequestration of these remodeled organelles in viral factories. The chain is Non-structural protein 5 from Rotavirus A (isolate RVA/Human/Belgium/B4106/2000/G3P11[14]) (RV-A).